The chain runs to 104 residues: Large ribosomal subunit protein uL24 (104 aa).

The protein belongs to the universal ribosomal protein uL24 family. In terms of assembly, part of the 50S ribosomal subunit.

Functionally, one of two assembly initiator proteins, it binds directly to the 5'-end of the 23S rRNA, where it nucleates assembly of the 50S subunit. Its function is as follows. One of the proteins that surrounds the polypeptide exit tunnel on the outside of the subunit. This chain is Large ribosomal subunit protein uL24, found in Citrobacter koseri (strain ATCC BAA-895 / CDC 4225-83 / SGSC4696).